The chain runs to 398 residues: Acetate kinase (398 aa).

N10 lines the Mg(2+) pocket. K17 contributes to the ATP binding site. R91 provides a ligand contact to substrate. The active-site Proton donor/acceptor is D148. Residues 208–212 (HLGNG), 283–285 (DCR), and 331–335 (GIGEN) contribute to the ATP site. Residue E385 coordinates Mg(2+).

It belongs to the acetokinase family. Homodimer. Mg(2+) is required as a cofactor. Mn(2+) serves as cofactor.

The protein localises to the cytoplasm. The enzyme catalyses acetate + ATP = acetyl phosphate + ADP. It participates in metabolic intermediate biosynthesis; acetyl-CoA biosynthesis; acetyl-CoA from acetate: step 1/2. In terms of biological role, catalyzes the formation of acetyl phosphate from acetate and ATP. Can also catalyze the reverse reaction. The protein is Acetate kinase of Shewanella loihica (strain ATCC BAA-1088 / PV-4).